We begin with the raw amino-acid sequence, 1531 residues long: La-related protein Larp4B (1531 aa).

Positions 112-147 are enriched in low complexity; it reads HTHVAHQQQQQQQQQTIQQHLHQQQQQQSPHPAQHL. Disordered stretches follow at residues 112-148 and 239-263; these read HTHV…QHLT and QLPA…EPNI. Residues 262–351 enclose the HTH La-type RNA-binding domain; it reads NIPLDKLKQM…RPNRKRCIII (90 aa). The region spanning 348–423 is the RRM domain; sequence CIIILREISN…KPIMARIKPK (76 aa). Disordered stretches follow at residues 533-605, 710-736, 748-768, 791-1135, 1160-1211, and 1251-1285; these read PLPP…QGGN, AHSH…ASSS, TAPA…QQTQ, QEAG…SNQQ, DVVR…TPAL, and ASSK…QPSQ. Over residues 565–578 the composition is skewed to low complexity; it reads YNNNHRGNPNNVGG. Composition is skewed to low complexity over residues 754–768 and 810–826; these read QPGQ…QQTQ and SSNM…TSMS. Over residues 860–884 the composition is skewed to polar residues; the sequence is SSPSNPHPQQHLMSSSTGSNVQSAG. Positions 945-959 are enriched in low complexity; the sequence is ALSSQQQQHHLTTGT. Residues 966–975 show a composition bias toward basic residues; the sequence is HHYHHHHHHN. Gly residues predominate over residues 983 to 1004; it reads NSGGLGVSSGGSGGGGSGGGSG. Over residues 1031 to 1045 the composition is skewed to low complexity; the sequence is HQQQQQQQQQQQQQQ. Residues 1068–1086 are compositionally biased toward polar residues; that stretch reads TSATAPHTPQATGGASLHN. A compositionally biased stretch (low complexity) spans 1087-1115; it reads STTSSSSSTGLGQKQTLHQQQQQAPQQHQ. Ser1123 carries the post-translational modification Phosphoserine. Residues 1164–1173 show a composition bias toward gly residues; the sequence is TGGGGGGGGK. A compositionally biased stretch (polar residues) spans 1183–1200; the sequence is PQGQNQPHMAPNYQQHQP. A compositionally biased stretch (basic and acidic residues) spans 1270 to 1280; sequence KSNKTEDEMHP. Residues Ser1370 and Ser1413 each carry the phosphoserine modification. Disordered stretches follow at residues 1393–1418 and 1450–1531; these read KAAA…TGSH and GGAS…ANNS. 2 stretches are compositionally biased toward polar residues: residues 1467–1477 and 1502–1515; these read ATNTTQGSSAV and QHYG…TNAN.

In terms of biological role, probable RNA binding protein. Negatively regulates myc at the protein level, via an unknown mechanism, and may therefore have a role in growth. Has no effect on myc mRNA levels. The polypeptide is La-related protein Larp4B (Drosophila melanogaster (Fruit fly)).